The chain runs to 218 residues: Deoxyribose-phosphate aldolase (218 aa).

The Proton donor/acceptor role is filled by aspartate 92. Residue lysine 155 is the Schiff-base intermediate with acetaldehyde of the active site. Lysine 184 (proton donor/acceptor) is an active-site residue.

This sequence belongs to the DeoC/FbaB aldolase family. DeoC type 1 subfamily.

The protein localises to the cytoplasm. It catalyses the reaction 2-deoxy-D-ribose 5-phosphate = D-glyceraldehyde 3-phosphate + acetaldehyde. The protein operates within carbohydrate degradation; 2-deoxy-D-ribose 1-phosphate degradation; D-glyceraldehyde 3-phosphate and acetaldehyde from 2-deoxy-alpha-D-ribose 1-phosphate: step 2/2. Catalyzes a reversible aldol reaction between acetaldehyde and D-glyceraldehyde 3-phosphate to generate 2-deoxy-D-ribose 5-phosphate. This is Deoxyribose-phosphate aldolase from Clostridium kluyveri (strain NBRC 12016).